Reading from the N-terminus, the 628-residue chain is tRNA uridine 5-carboxymethylaminomethyl modification enzyme MnmG (628 aa).

FAD-binding positions include 14 to 19, V126, and S181; that span reads GAGHAG. 273–287 lines the NAD(+) pocket; that stretch reads GPRYCPSIEDKVVRF. Residue Q370 participates in FAD binding.

Belongs to the MnmG family. In terms of assembly, homodimer. Heterotetramer of two MnmE and two MnmG subunits. Requires FAD as cofactor.

Its subcellular location is the cytoplasm. Its function is as follows. NAD-binding protein involved in the addition of a carboxymethylaminomethyl (cmnm) group at the wobble position (U34) of certain tRNAs, forming tRNA-cmnm(5)s(2)U34. This is tRNA uridine 5-carboxymethylaminomethyl modification enzyme MnmG from Pelobacter propionicus (strain DSM 2379 / NBRC 103807 / OttBd1).